The following is a 443-amino-acid chain: Pentatricopeptide repeat-containing protein 6, mitochondrial (443 aa).

The transit peptide at 1–13 (MRILGSLPNNIRK) directs the protein to the mitochondrion. PPR repeat units lie at residues 130-164 (NIVDYTHILRVAMYTGNKHILEYIVARVKEKRIRP) and 220-254 (NSTTYDYLMVGLSRDGKIREIYDLIDTVWGINENS).

Its subcellular location is the mitochondrion. Its function is as follows. Mitochondrial RNA-binding protein required for the stability of the atp9 mRNA. This is Pentatricopeptide repeat-containing protein 6, mitochondrial (ppr6) from Schizosaccharomyces pombe (strain 972 / ATCC 24843) (Fission yeast).